The following is a 152-amino-acid chain: Xanthine-guanine phosphoribosyltransferase (152 aa).

5-phospho-alpha-D-ribose 1-diphosphate-binding positions include 37–38 (RG), Arg-69, and 88–96 (DDLVDTGGT). Residue Arg-69 participates in GMP binding. Asp-89 serves as a coordination point for Mg(2+). Guanine-binding residues include Asp-92 and Ile-135. The xanthine site is built by Asp-92 and Ile-135. Residues 92-96 (DTGGT) and 134-135 (WI) contribute to the GMP site.

Belongs to the purine/pyrimidine phosphoribosyltransferase family. XGPT subfamily. In terms of assembly, homotetramer. It depends on Mg(2+) as a cofactor.

It is found in the cell inner membrane. The enzyme catalyses GMP + diphosphate = guanine + 5-phospho-alpha-D-ribose 1-diphosphate. The catalysed reaction is XMP + diphosphate = xanthine + 5-phospho-alpha-D-ribose 1-diphosphate. It catalyses the reaction IMP + diphosphate = hypoxanthine + 5-phospho-alpha-D-ribose 1-diphosphate. It functions in the pathway purine metabolism; GMP biosynthesis via salvage pathway; GMP from guanine: step 1/1. Its pathway is purine metabolism; XMP biosynthesis via salvage pathway; XMP from xanthine: step 1/1. In terms of biological role, purine salvage pathway enzyme that catalyzes the transfer of the ribosyl-5-phosphate group from 5-phospho-alpha-D-ribose 1-diphosphate (PRPP) to the N9 position of the 6-oxopurines guanine and xanthine to form the corresponding ribonucleotides GMP (guanosine 5'-monophosphate) and XMP (xanthosine 5'-monophosphate), with the release of PPi. To a lesser extent, also acts on hypoxanthine. This Pectobacterium atrosepticum (strain SCRI 1043 / ATCC BAA-672) (Erwinia carotovora subsp. atroseptica) protein is Xanthine-guanine phosphoribosyltransferase.